Consider the following 204-residue polypeptide: MNAPRPHDLLWGMPVSGLPTDAPQWALEVLASGQPVVVRRATCEAGWVAVGLRGHGRAQRLGALMRLTDIQRQQGPEALRVHGQSPWPALQALASVTPVLQARGLAWGPTGGVGYQLATGMEVVHAGSDLDLLLRTPRPLARAQARELLDILDCAPCRIDVQLETPSGAVALREWASFALRVLLKSPHGPRLVSDPWAVMERAP.

Residues D129 and D131 contribute to the active site.

The protein belongs to the MdcG family.

The catalysed reaction is apo-[malonate decarboxylase ACP] + 2'-(5''-triphospho-alpha-D-ribosyl)-3'-dephospho-CoA = holo-[malonate decarboxylase ACP] + diphosphate. Its function is as follows. Transfers 2'-(5-triphosphoribosyl)-3'-dephosphocoenzyme-A to the apo-[acyl-carrier-protein] of the malonate decarboxylase to yield holo-[acyl-carrier-protein]. This is Phosphoribosyl-dephospho-CoA transferase from Pseudomonas putida (Arthrobacter siderocapsulatus).